The primary structure comprises 232 residues: Pirin-like protein CC_1473 (232 aa).

The protein belongs to the pirin family.

The chain is Pirin-like protein CC_1473 from Caulobacter vibrioides (strain ATCC 19089 / CIP 103742 / CB 15) (Caulobacter crescentus).